Here is a 66-residue protein sequence, read N- to C-terminus: Large ribosomal subunit protein uL29 (66 aa).

Belongs to the universal ribosomal protein uL29 family.

The chain is Large ribosomal subunit protein uL29 from Methylibium petroleiphilum (strain ATCC BAA-1232 / LMG 22953 / PM1).